A 386-amino-acid chain; its full sequence is DNA-directed RNA polymerase subunit Rpo1C (386 aa).

The protein belongs to the RNA polymerase beta' chain family. In terms of assembly, part of the RNA polymerase complex.

Its subcellular location is the cytoplasm. The catalysed reaction is RNA(n) + a ribonucleoside 5'-triphosphate = RNA(n+1) + diphosphate. Its function is as follows. DNA-dependent RNA polymerase (RNAP) catalyzes the transcription of DNA into RNA using the four ribonucleoside triphosphates as substrates. Forms part of the jaw domain. The chain is DNA-directed RNA polymerase subunit Rpo1C from Methanococcus maripaludis (strain C5 / ATCC BAA-1333).